The sequence spans 56 residues: Ovomucoid (56 aa).

One can recognise a Kazal-like domain in the interval 6 to 56 (VDCSEYPKPECTAEERPICGSDNKTYGNKCNFCNAVVESNGTLTLRNFGKC). 3 disulfides stabilise this stretch: cysteine 8–cysteine 38, cysteine 16–cysteine 35, and cysteine 24–cysteine 56. N-linked (GlcNAc...) asparagine glycosylation is present at asparagine 45.

The protein resides in the secreted. The chain is Ovomucoid from Bambusicola thoracicus (Chinese bamboo-partridge).